A 58-amino-acid polypeptide reads, in one-letter code: Large ribosomal subunit protein eL24 (58 aa).

Zn(2+) is bound by residues Cys-6, Cys-9, Cys-32, and Cys-36. The C4-type zinc finger occupies 6 to 36; that stretch reads CSFCGYDIEPGTGKMYVRRDGRVFYFCSGKC.

The protein belongs to the eukaryotic ribosomal protein eL24 family. Part of the 50S ribosomal subunit. Forms a cluster with proteins L3 and L14. Zn(2+) serves as cofactor.

Its function is as follows. Binds to the 23S rRNA. This is Large ribosomal subunit protein eL24 from Archaeoglobus fulgidus (strain ATCC 49558 / DSM 4304 / JCM 9628 / NBRC 100126 / VC-16).